The chain runs to 306 residues: Recombination-associated protein RdgC (306 aa).

The protein belongs to the RdgC family.

Its subcellular location is the cytoplasm. The protein localises to the nucleoid. In terms of biological role, may be involved in recombination. The polypeptide is Recombination-associated protein RdgC (Pseudomonas syringae pv. tomato (strain ATCC BAA-871 / DC3000)).